We begin with the raw amino-acid sequence, 379 residues long: Cytochrome b (379 aa).

A run of 4 helical transmembrane segments spans residues 33–53, 77–98, 113–133, and 178–198; these read FGSLLGLCLISQILTGLFLAM, WLIRNLHANGASFFFICLYLHI, WNIGVVLFLLVMMTAFVGYVL, and FFAFHFLFPFVVAGATMLHLL. Residues His83 and His97 each coordinate heme b. His182 and His196 together coordinate heme b. His201 is a binding site for a ubiquinone. The next 4 helical transmembrane spans lie at 226–246, 288–308, 320–340, and 347–367; these read YKDLLGFIIMLTALTMLALFY, LGGVLALLSSILVLMVVPILH, ISQLLFWILVADMLVLTWIGG, and YIIIGQVASVLYFSLFLVLNP.

Belongs to the cytochrome b family. The cytochrome bc1 complex contains 3 respiratory subunits (MT-CYB, CYC1 and UQCRFS1), 2 core proteins (UQCRC1 and UQCRC2) and probably 6 low-molecular weight proteins. Heme b is required as a cofactor.

The protein resides in the mitochondrion inner membrane. Functionally, component of the ubiquinol-cytochrome c reductase complex (complex III or cytochrome b-c1 complex) that is part of the mitochondrial respiratory chain. The b-c1 complex mediates electron transfer from ubiquinol to cytochrome c. Contributes to the generation of a proton gradient across the mitochondrial membrane that is then used for ATP synthesis. The chain is Cytochrome b (mt-cyb) from Anguilla mossambica (African longfin eel).